Reading from the N-terminus, the 369-residue chain is DNA replication and repair protein RecF (369 aa).

30–37 (GQNGMGKT) provides a ligand contact to ATP.

Belongs to the RecF family.

Its subcellular location is the cytoplasm. Functionally, the RecF protein is involved in DNA metabolism; it is required for DNA replication and normal SOS inducibility. RecF binds preferentially to single-stranded, linear DNA. It also seems to bind ATP. This is DNA replication and repair protein RecF from Bacteroides thetaiotaomicron (strain ATCC 29148 / DSM 2079 / JCM 5827 / CCUG 10774 / NCTC 10582 / VPI-5482 / E50).